The chain runs to 143 residues: Large ribosomal subunit protein uL11 (143 aa).

Belongs to the universal ribosomal protein uL11 family. As to quaternary structure, part of the ribosomal stalk of the 50S ribosomal subunit. Interacts with L10 and the large rRNA to form the base of the stalk. L10 forms an elongated spine to which L12 dimers bind in a sequential fashion forming a multimeric L10(L12)X complex. One or more lysine residues are methylated.

Its function is as follows. Forms part of the ribosomal stalk which helps the ribosome interact with GTP-bound translation factors. The polypeptide is Large ribosomal subunit protein uL11 (Psychrobacter sp. (strain PRwf-1)).